We begin with the raw amino-acid sequence, 318 residues long: Thymidylate synthase (318 aa).

DUMP is bound by residues arginine 25 and 180 to 181 (RR). Cysteine 200 acts as the Nucleophile in catalysis. DUMP-binding positions include 220–223 (RSGD), asparagine 231, and 261–263 (HIY). Aspartate 223 serves as a coordination point for (6R)-5,10-methylene-5,6,7,8-tetrahydrofolate. Alanine 317 lines the (6R)-5,10-methylene-5,6,7,8-tetrahydrofolate pocket.

The protein belongs to the thymidylate synthase family. Bacterial-type ThyA subfamily. Homodimer.

It is found in the cytoplasm. It carries out the reaction dUMP + (6R)-5,10-methylene-5,6,7,8-tetrahydrofolate = 7,8-dihydrofolate + dTMP. It functions in the pathway pyrimidine metabolism; dTTP biosynthesis. In terms of biological role, catalyzes the reductive methylation of 2'-deoxyuridine-5'-monophosphate (dUMP) to 2'-deoxythymidine-5'-monophosphate (dTMP) while utilizing 5,10-methylenetetrahydrofolate (mTHF) as the methyl donor and reductant in the reaction, yielding dihydrofolate (DHF) as a by-product. This enzymatic reaction provides an intracellular de novo source of dTMP, an essential precursor for DNA biosynthesis. This chain is Thymidylate synthase, found in Lactobacillus acidophilus (strain ATCC 700396 / NCK56 / N2 / NCFM).